A 145-amino-acid chain; its full sequence is Functional amyloid chaperone FapA (145 aa).

A signal peptide spans 1-27 (MRKRDKRLYHLLLVGCVLGSLSLTAQA).

It belongs to the FapA family. In terms of assembly, monomer in solution. Interacts with FapC but not FapB in vitro.

The protein localises to the periplasm. An intrinsically disordered chaperone for fibril amyloid FapC that guards against fibrillation, pro within the periplasm. Upon overexpression of the endogenous six-gene locus (fapA-fapF), cells form large clumps during liquid growth, make large amounts of biofilm and produce relatively unstable amyloid fibrils. The protein is Functional amyloid chaperone FapA of Pseudomonas putida (strain ATCC 700007 / DSM 6899 / JCM 31910 / BCRC 17059 / LMG 24140 / F1).